The sequence spans 95 residues: Glutaredoxin 1 (95 aa).

One can recognise a Glutaredoxin domain in the interval 1–95 (MNKSILHTII…DKLLEHQPKN (95 aa)). Residues Cys-17 and Cys-20 are joined by a disulfide bond.

The protein belongs to the glutaredoxin family. In terms of assembly, monomer.

It is found in the cytoplasm. In terms of biological role, has a glutathione-disulfide oxidoreductase activity in the presence of NADPH and glutathione reductase. Reduces low molecular weight disulfides and proteins. The sequence is that of Glutaredoxin 1 (grxC1) from Rickettsia prowazekii (strain Madrid E).